The following is a 139-amino-acid chain: UPF0102 protein Caul_0175 (139 aa).

The protein belongs to the UPF0102 family.

The protein is UPF0102 protein Caul_0175 of Caulobacter sp. (strain K31).